The primary structure comprises 452 residues: SAGA complex/transcription factor TFIID complex subunit Taf6 (452 aa).

The region spanning 4-68 is the Histone-fold domain; it reads TVWNIESIKD…TSADISSALR (65 aa).

Belongs to the TAF6 family. As to quaternary structure, component of the 1.8 MDa SAGA (Spt-Ada-Gcn5 acetyltransferase) complex, which is composed of 19 subunits tra1, spt7, taf5, ngg1/ada3, sgf73, spt20, spt8, taf12, taf6, hfi1/ada1, ubp8, gcn5, ada2, spt3, sgf29, taf10, taf9, sgf11 and sus1. The SAGA complex is composed of 4 modules, namely the HAT (histone acetyltransferase) module (gcn5, ada2, ngg1/ada3 and sgf29), the DUB (deubiquitinating) module (ubp8, sgf11, sgf73 and sus1), the core or TAF (TBP-associated factor) module (taf5, taf6, taf9, taf10 and taf12), and the Tra1 or SPT (Suppressor of Ty) module (tra1, hfi1/ada1, spt3, spt7, spt8 and spt20). The Tra1/SPT module binds activators, the core module recruits TBP (TATA-binding protein), the HAT module contains the histone H3 acetyltransferase gcn5, and the DUB module comprises the histone H2B deubiquitinase ubp8. Interacts with gcn5, taf5 and taf73. Component of the 1.2 MDa TFIID complex, which is composed of TATA-binding protein (TBP) and the 14 TBP-associated factors (TAFs). It comprises 1 copy of each taf1, taf2, taf3, taf7, taf8, taf11, taf13, 2 copies of each taf4, taf5, taf6, taf9, taf10, taf12, and 3 copies of taf14. In TFIID, taf6 heterodimerizes with taf9, forming ultimately an octamer consisting of a taf6-taf9 heterotetramer core flanked by taf4-taf12 dimers on either side, similar to the histone H2A-H2B-H3-H4 octamer.

Its subcellular location is the nucleus. Its function is as follows. Functions as a component of both the DNA-binding general transcription initiation factor complex TFIID and the transcription coactivator SAGA complex. Binding of TFIID to a promoter (with or without TATA element) is the initial step in pre-initiation complex (PIC) formation. TFIID plays a key role in the regulation of gene expression by RNA polymerase II through different activities such as transcription activator interaction, core promoter recognition and selectivity, TFIIA and TFIIB interaction, chromatin modification (histone acetylation by TAF1), facilitation of DNA opening and initiation of transcription. SAGA acts as a general cofactor required for essentially all RNA polymerase II transcription. At the promoters, SAGA is required for transcription pre-initiation complex (PIC) recruitment. It influences RNA polymerase II transcriptional activity through different activities such as TBP interaction (via core/TAF module) and promoter selectivity, interaction with transcription activators (via Tra1/SPT module), and chromatin modification through histone acetylation (via HAT module) and deubiquitination (via DUB module). SAGA preferentially acetylates histones H3 (to form H3K9ac, H3K14ac, H3K18ac and H3K23ac) and H2B and deubiquitinates histone H2B. SAGA interacts with DNA via upstream activating sequences (UASs). The chain is SAGA complex/transcription factor TFIID complex subunit Taf6 from Schizosaccharomyces pombe (strain 972 / ATCC 24843) (Fission yeast).